The chain runs to 437 residues: Phosphomethylpyrimidine synthase (437 aa).

Residues N69, M98, Y127, H163, 185-187, 226-229, and E265 contribute to the substrate site; these read SRG and DACR. H269 is a Zn(2+) binding site. Y292 is a binding site for substrate. H333 contributes to the Zn(2+) binding site. [4Fe-4S] cluster-binding residues include C409, C412, and C416.

It belongs to the ThiC family. [4Fe-4S] cluster serves as cofactor.

It catalyses the reaction 5-amino-1-(5-phospho-beta-D-ribosyl)imidazole + S-adenosyl-L-methionine = 4-amino-2-methyl-5-(phosphooxymethyl)pyrimidine + CO + 5'-deoxyadenosine + formate + L-methionine + 3 H(+). Its pathway is cofactor biosynthesis; thiamine diphosphate biosynthesis. Functionally, catalyzes the synthesis of the hydroxymethylpyrimidine phosphate (HMP-P) moiety of thiamine from aminoimidazole ribotide (AIR) in a radical S-adenosyl-L-methionine (SAM)-dependent reaction. In Clostridium botulinum (strain Langeland / NCTC 10281 / Type F), this protein is Phosphomethylpyrimidine synthase.